Consider the following 378-residue polypeptide: 4-hydroxy-3-methylbut-2-en-1-yl diphosphate synthase (flavodoxin) (378 aa).

4 residues coordinate [4Fe-4S] cluster: Cys268, Cys271, Cys303, and Glu310.

The protein belongs to the IspG family. Requires [4Fe-4S] cluster as cofactor.

The enzyme catalyses (2E)-4-hydroxy-3-methylbut-2-enyl diphosphate + oxidized [flavodoxin] + H2O + 2 H(+) = 2-C-methyl-D-erythritol 2,4-cyclic diphosphate + reduced [flavodoxin]. It participates in isoprenoid biosynthesis; isopentenyl diphosphate biosynthesis via DXP pathway; isopentenyl diphosphate from 1-deoxy-D-xylulose 5-phosphate: step 5/6. Converts 2C-methyl-D-erythritol 2,4-cyclodiphosphate (ME-2,4cPP) into 1-hydroxy-2-methyl-2-(E)-butenyl 4-diphosphate. This chain is 4-hydroxy-3-methylbut-2-en-1-yl diphosphate synthase (flavodoxin), found in Corynebacterium efficiens (strain DSM 44549 / YS-314 / AJ 12310 / JCM 11189 / NBRC 100395).